Consider the following 248-residue polypeptide: Ribonuclease PH (248 aa).

Phosphate is bound by residues R86 and 124-126 (GTR).

It belongs to the RNase PH family. In terms of assembly, homohexameric ring arranged as a trimer of dimers.

The enzyme catalyses tRNA(n+1) + phosphate = tRNA(n) + a ribonucleoside 5'-diphosphate. Its function is as follows. Phosphorolytic 3'-5' exoribonuclease that plays an important role in tRNA 3'-end maturation. Removes nucleotide residues following the 3'-CCA terminus of tRNAs; can also add nucleotides to the ends of RNA molecules by using nucleoside diphosphates as substrates, but this may not be physiologically important. Probably plays a role in initiation of 16S rRNA degradation (leading to ribosome degradation) during starvation. The sequence is that of Ribonuclease PH from Clostridium perfringens (strain ATCC 13124 / DSM 756 / JCM 1290 / NCIMB 6125 / NCTC 8237 / Type A).